The sequence spans 587 residues: Glutamine--tRNA ligase (587 aa).

The short motif at 58–68 is the 'HIGH' region element; sequence PEPNGYLHIGH. ATP contacts are provided by residues 59–61 and 65–71; these read EPN and HIGHAKS. Residues Asp-91 and Tyr-240 each contribute to the L-glutamine site. Residues Thr-259 and 294–295 each bind ATP; that span reads RL. A 'KMSKS' region motif is present at residues 301–305; that stretch reads VTSKR.

This sequence belongs to the class-I aminoacyl-tRNA synthetase family. As to quaternary structure, monomer.

It localises to the cytoplasm. The catalysed reaction is tRNA(Gln) + L-glutamine + ATP = L-glutaminyl-tRNA(Gln) + AMP + diphosphate. The chain is Glutamine--tRNA ligase from Bordetella pertussis (strain Tohama I / ATCC BAA-589 / NCTC 13251).